We begin with the raw amino-acid sequence, 1039 residues long: Alpha-mannosidase 2C1 (1039 aa).

Co(2+) contacts are provided by His-259, Asp-261, Asp-371, and His-576. Residue Asp-371 is the Nucleophile of the active site.

The protein belongs to the glycosyl hydrolase 38 family. It depends on Co(2+) as a cofactor. In terms of tissue distribution, expressed in kidney and liver (at protein level). Widely expressed, with highest levels in lung, ovary and testis. Also detected at lower levels in heart, brain, liver, spleen, kidney and thymus.

Its subcellular location is the cytoplasm. It catalyses the reaction Hydrolysis of terminal, non-reducing alpha-D-mannose residues in alpha-D-mannosides.. Inhibited by 1,4-dideoxy-1,4-imino-d-mannitol (DIM) and EDTA. Cleaves alpha 1,2-, alpha 1,3-, and alpha 1,6-linked mannose residues from glycoproteins. Involved in the degradation of free oligosaccharides in the cytoplasm. The protein is Alpha-mannosidase 2C1 of Mus musculus (Mouse).